The primary structure comprises 366 residues: D-alanine--D-alanine ligase (366 aa).

The ATP-grasp domain maps to 150 to 353 (KRVLRDAGVP…YPALVDRLIV (204 aa)). ATP is bound at residue 180 to 235 (IGQLGLPLFIKPASQGSSVGVSKVTDRAGFAAALALAFRYDAKVLVEQGISGREIE). Positions 307, 320, and 322 each coordinate Mg(2+).

It belongs to the D-alanine--D-alanine ligase family. Mg(2+) serves as cofactor. Mn(2+) is required as a cofactor.

The protein localises to the cytoplasm. It catalyses the reaction 2 D-alanine + ATP = D-alanyl-D-alanine + ADP + phosphate + H(+). The protein operates within cell wall biogenesis; peptidoglycan biosynthesis. Functionally, cell wall formation. The polypeptide is D-alanine--D-alanine ligase (Sodalis glossinidius (strain morsitans)).